Here is a 712-residue protein sequence, read N- to C-terminus: Amine oxidase [copper-containing] gamma 1 (712 aa).

A signal peptide spans 1–24; that stretch reads MAEPSFARLFLLFFSFLLIFATYS. N-linked (GlcNAc...) asparagine glycosylation is found at Asn146 and Asn173. A disulfide bridge connects residues Cys188 and Cys210. Substrate is bound at residue 352-363; it reads YMDAGELGLGPT. Asp354 functions as the Proton acceptor in the catalytic mechanism. An intrachain disulfide couples Cys373 to Cys399. 439–444 lines the substrate pocket; that stretch reads VGNYDY. The Schiff-base intermediate with substrate; via topaquinone role is filled by Tyr442. Tyr442 is subject to 2',4',5'-topaquinone. Positions 499 and 501 each coordinate Cu cation. Positions 508, 509, and 510 each coordinate Mn(2+). N-linked (GlcNAc...) asparagine glycans are attached at residues Asn516 and Asn617. Residues Asp651 and Ile652 each contribute to the Mn(2+) site. Residue His662 coordinates Cu cation.

This sequence belongs to the copper/topaquinone oxidase family. Homodimer. Cu cation is required as a cofactor. The cofactor is Zn(2+). Requires L-topaquinone as cofactor. Mn(2+) serves as cofactor. Post-translationally, topaquinone (TPQ) is generated by copper-dependent autoxidation of a specific tyrosyl residue. As to expression, mostly expressed in roots, stems and flowers, and, at lower levels, in leaves and cotyledons.

The protein resides in the secreted. Its subcellular location is the extracellular space. It is found in the apoplast. The enzyme catalyses a primary methyl amine + O2 + H2O = an aldehyde + H2O2 + NH4(+). The protein operates within amine and polyamine degradation; putrescine degradation. Its function is as follows. Copper amine oxidase that can use putrescine and spermidine as substrates. Required for abscisic acid- (ABA) and polyamine- (PA) and H(2)O(2)-dependent induced nitric oxide (NO) biosynthesis. Involved in ABA signal transduction and in responses to osmotic stress. In Arabidopsis thaliana (Mouse-ear cress), this protein is Amine oxidase [copper-containing] gamma 1.